Reading from the N-terminus, the 236-residue chain is UPF0502 protein Bxeno_B1639 (236 aa).

This sequence belongs to the UPF0502 family.

The polypeptide is UPF0502 protein Bxeno_B1639 (Paraburkholderia xenovorans (strain LB400)).